Consider the following 275-residue polypeptide: Expansin-A23 (275 aa).

Positions 1–27 are cleaved as a signal peptide; the sequence is MNLLGKMIYVEGFMMIMATLLVSMSYG. Residues 72–182 form the Expansin-like EG45 domain; it reads QGACGYGDLF…RRISCARTGG (111 aa). The region spanning 192-271 is the Expansin-like CBD domain; it reads YFLMILPYNV…NWGFGQTFDG (80 aa).

The protein belongs to the expansin family. Expansin A subfamily.

Its subcellular location is the secreted. It is found in the cell wall. It localises to the membrane. Functionally, causes loosening and extension of plant cell walls by disrupting non-covalent bonding between cellulose microfibrils and matrix glucans. No enzymatic activity has been found. In Arabidopsis thaliana (Mouse-ear cress), this protein is Expansin-A23 (EXPA23).